The chain runs to 246 residues: Purine nucleoside phosphorylase Cgl2154/cg2365 (246 aa).

Positions 68, 107, and 124 each coordinate Zn(2+).

The protein belongs to the purine nucleoside phosphorylase YfiH/LACC1 family. In terms of assembly, homodimer. Cu(2+) serves as cofactor. Requires Zn(2+) as cofactor.

The catalysed reaction is adenosine + phosphate = alpha-D-ribose 1-phosphate + adenine. It catalyses the reaction S-methyl-5'-thioadenosine + phosphate = 5-(methylsulfanyl)-alpha-D-ribose 1-phosphate + adenine. The enzyme catalyses inosine + phosphate = alpha-D-ribose 1-phosphate + hypoxanthine. It carries out the reaction adenosine + H2O + H(+) = inosine + NH4(+). In terms of biological role, purine nucleoside enzyme that catalyzes the phosphorolysis of adenosine and inosine nucleosides, yielding D-ribose 1-phosphate and the respective free bases, adenine and hypoxanthine. Also catalyzes the phosphorolysis of S-methyl-5'-thioadenosine into adenine and S-methyl-5-thio-alpha-D-ribose 1-phosphate. Also has adenosine deaminase activity. This Corynebacterium glutamicum (strain ATCC 13032 / DSM 20300 / JCM 1318 / BCRC 11384 / CCUG 27702 / LMG 3730 / NBRC 12168 / NCIMB 10025 / NRRL B-2784 / 534) protein is Purine nucleoside phosphorylase Cgl2154/cg2365.